The primary structure comprises 94 residues: Host-modulation protein 11K (94 aa).

In terms of assembly, interacts with host GRB2; this interaction alters host cell environment by modulating host signaling pathways.

The protein localises to the host cytoplasm. Its function is as follows. Enhances viral DNA replication and virion release. Mechansitically, optimizes viral DNA replication by interacting with host GRB2 to inhibit the negative effect of ERK signaling on B19 viral replication. Plays a role in viral infectivity. Induces apoptosis of primary erythroid progenitor cells. In Human parvovirus B19 (strain HV) (HPV B19), this protein is Host-modulation protein 11K (11K).